The chain runs to 545 residues: Membrane protein insertase YidC (545 aa).

Residues 6-26 (NLLLIALLFVSFMIWQAWQTD) traverse the membrane as a helical segment. A disordered region spans residues 31–54 (PVAQTTQQTSNPATGDAASSAVPA). A run of 4 helical transmembrane segments spans residues 342 to 362 (KFIH…TFIV), 417 to 437 (LGGC…YYML), 455 to 475 (LSAQ…MFFI), and 496 to 516 (PVIF…YYIV).

Belongs to the OXA1/ALB3/YidC family. Type 1 subfamily. Interacts with the Sec translocase complex via SecD. Specifically interacts with transmembrane segments of nascent integral membrane proteins during membrane integration.

The protein resides in the cell inner membrane. Its function is as follows. Required for the insertion and/or proper folding and/or complex formation of integral membrane proteins into the membrane. Involved in integration of membrane proteins that insert both dependently and independently of the Sec translocase complex, as well as at least some lipoproteins. Aids folding of multispanning membrane proteins. The protein is Membrane protein insertase YidC of Serratia proteamaculans (strain 568).